The following is a 201-amino-acid chain: Large ribosomal subunit protein uL4 (201 aa).

The segment at 46-71 (QKTRAEVVGSGKKPWRQKGTGRARAG) is disordered.

The protein belongs to the universal ribosomal protein uL4 family. Part of the 50S ribosomal subunit.

Its function is as follows. One of the primary rRNA binding proteins, this protein initially binds near the 5'-end of the 23S rRNA. It is important during the early stages of 50S assembly. It makes multiple contacts with different domains of the 23S rRNA in the assembled 50S subunit and ribosome. Forms part of the polypeptide exit tunnel. The sequence is that of Large ribosomal subunit protein uL4 from Shewanella piezotolerans (strain WP3 / JCM 13877).